The primary structure comprises 343 residues: Anthranilate phosphoribosyltransferase (343 aa).

Residues glycine 84, 87–88, threonine 92, 94–97, 112–120, and serine 124 each bind 5-phospho-alpha-D-ribose 1-diphosphate; these read GD, NIST, and KHGNRGVSS. An anthranilate-binding site is contributed by glycine 84. Serine 96 contacts Mg(2+). Position 115 (asparagine 115) interacts with anthranilate. Arginine 170 contributes to the anthranilate binding site. Mg(2+)-binding residues include aspartate 229 and glutamate 230.

It belongs to the anthranilate phosphoribosyltransferase family. In terms of assembly, homodimer. The cofactor is Mg(2+).

The catalysed reaction is N-(5-phospho-beta-D-ribosyl)anthranilate + diphosphate = 5-phospho-alpha-D-ribose 1-diphosphate + anthranilate. It participates in amino-acid biosynthesis; L-tryptophan biosynthesis; L-tryptophan from chorismate: step 2/5. Catalyzes the transfer of the phosphoribosyl group of 5-phosphorylribose-1-pyrophosphate (PRPP) to anthranilate to yield N-(5'-phosphoribosyl)-anthranilate (PRA). This chain is Anthranilate phosphoribosyltransferase, found in Burkholderia orbicola (strain MC0-3).